The primary structure comprises 639 residues: DNA mismatch repair protein MutL (639 aa).

Residues serine 336–alanine 392 are disordered. Over residues alanine 349 to glutamate 358 the composition is skewed to basic and acidic residues. Over residues arginine 370–alanine 392 the composition is skewed to low complexity.

It belongs to the DNA mismatch repair MutL/HexB family.

In terms of biological role, this protein is involved in the repair of mismatches in DNA. It is required for dam-dependent methyl-directed DNA mismatch repair. May act as a 'molecular matchmaker', a protein that promotes the formation of a stable complex between two or more DNA-binding proteins in an ATP-dependent manner without itself being part of a final effector complex. This Edwardsiella ictaluri (strain 93-146) protein is DNA mismatch repair protein MutL.